The sequence spans 60 residues: Cytotoxin 1 (60 aa).

Cystine bridges form between Cys-3–Cys-21, Cys-14–Cys-38, Cys-42–Cys-53, and Cys-54–Cys-59.

Belongs to the three-finger toxin family. Short-chain subfamily. Type IA cytotoxin sub-subfamily. As to quaternary structure, monomer in solution; Homodimer and oligomer in the presence of negatively charged lipids forming a pore with a size ranging between 20 and 30 Angstroms. As to expression, expressed by the venom gland.

It is found in the secreted. The protein resides in the target cell membrane. In terms of biological role, shows cytolytic activity on many different cells by forming pore in lipid membranes. In vivo, increases heart rate or kills the animal by cardiac arrest. In addition, it binds to heparin with high affinity, interacts with Kv channel-interacting protein 1 (KCNIP1) in a calcium-independent manner, and binds to integrin alpha-V/beta-3 (ITGAV/ITGB3) with moderate affinity. The chain is Cytotoxin 1 from Naja mossambica (Mozambique spitting cobra).